We begin with the raw amino-acid sequence, 103 residues long: Small ribosomal subunit protein uS10 (103 aa).

It belongs to the universal ribosomal protein uS10 family. Part of the 30S ribosomal subunit.

In terms of biological role, involved in the binding of tRNA to the ribosomes. In Wigglesworthia glossinidia brevipalpis, this protein is Small ribosomal subunit protein uS10.